Here is a 435-residue protein sequence, read N- to C-terminus: Apparent malate synthase (435 aa).

Mg(2+) is bound by residues Glu159 and Asn180. Residue Glu159 participates in substrate binding.

The protein belongs to the HpcH/HpaI aldolase family. Mg(2+) serves as cofactor. It depends on Mn(2+) as a cofactor. Requires Co(2+) as cofactor. Ca(2+) is required as a cofactor.

The catalysed reaction is (S)-malyl-CoA = glyoxylate + acetyl-CoA. The enzyme catalyses (S)-malyl-CoA + H2O = (S)-malate + CoA + H(+). In terms of biological role, involved in the methylaspartate cycle. Catalyzes the biosynthesis of malate in two steps. In the first reaction acetyl-CoA is condensed reversibly with glyoxylate to form (S)-malyl-CoA. In the second reaction (S)-malyl-CoA is hydrolyzed to malate and CoA. It can also catalyze the condensation of propionyl-CoA with glyoxylate and of acetyl-CoA with pyruvate, however the CoA-ester hydrolysis reaction is highly specific for (S)-malyl-CoA. The polypeptide is Apparent malate synthase (aceB) (Haloarcula marismortui (strain ATCC 43049 / DSM 3752 / JCM 8966 / VKM B-1809) (Halobacterium marismortui)).